Consider the following 446-residue polypeptide: UPF0597 protein DvMF_1488 (446 aa).

It belongs to the UPF0597 family.

This is UPF0597 protein DvMF_1488 from Nitratidesulfovibrio vulgaris (strain DSM 19637 / Miyazaki F) (Desulfovibrio vulgaris).